We begin with the raw amino-acid sequence, 475 residues long: MACSLKDELLCSICLSIYQDPVSLGCEHYFCRRCITEHWVRQEAQGARDCPECRRTFAEPALAPSLKLANIVERYSSFPLDAILNARRAARPCQAHDKVKLFCLTDRALLCFFCDEPALHEQHQVTGIDDAFDELQRELKDQLQALQDSEREHTEALQLLKRQLAETKSSTKSLRTTIGEAFERLHRLLRERQKAMLEELEADTARTLTDIEQKVQRYSQQLRKVQEGAQILQERLAETDRHTFLAGVASLSERLKGKIHETNLTYEDFPTSKYTGPLQYTIWKSLFQDIHPVPAALTLDPGTAHQRLILSDDCTIVAYGNLHPQPLQDSPKRFDVEVSVLGSEAFSSGVHYWEVVVAEKTQWVIGLAHEAASRKGSIQIQPSRGFYCIVMHDGNQYSACTEPWTRLNVRDKLDKVGVFLDYDQGLLIFYNADDMSWLYTFREKFPGKLCSYFSPGQSHANGKNVQPLRINTVRI.

The RING-type zinc finger occupies 11–54; sequence CSICLSIYQDPVSLGCEHYFCRRCITEHWVRQEAQGARDCPECR. Residues 88-128 form a B box-type zinc finger; that stretch reads RAARPCQAHDKVKLFCLTDRALLCFFCDEPALHEQHQVTGI. Positions 93, 96, 114, and 120 each coordinate Zn(2+). Residues 127–241 adopt a coiled-coil conformation; that stretch reads GIDDAFDELQ…LQERLAETDR (115 aa). In terms of domain architecture, B30.2/SPRY spans 277–475; sequence PLQYTIWKSL…QPLRINTVRI (199 aa).

This sequence belongs to the TRIM/RBCC family. In terms of assembly, interacts with the ubiquitin-conjugating enzyme, UBE2D2. Polyubiquitinated, autoubiquitinated in the presence of UBE2D2.

The protein localises to the cytoplasm. It carries out the reaction S-ubiquitinyl-[E2 ubiquitin-conjugating enzyme]-L-cysteine + [acceptor protein]-L-lysine = [E2 ubiquitin-conjugating enzyme]-L-cysteine + N(6)-ubiquitinyl-[acceptor protein]-L-lysine.. It functions in the pathway protein modification; protein ubiquitination. Functionally, E3 ubiquitin ligase that plays a role in antifungal immunity by mediating 'Lys-27'-linked ubiquitination of CARD9 downstream of C-type lectin receptors; leading to CARD9 activation, followed by activation of NF-kappa-B and MAP kinase p38 pathways. E3 ubiquitin ligase activity is dependent on E2 ubiquitin-conjugating enzyme UBE2D2. The protein is E3 ubiquitin-protein ligase TRIM62 of Homo sapiens (Human).